Reading from the N-terminus, the 706-residue chain is Transferrin-binding protein B (706 aa).

Residues 1–20 form the signal peptide; sequence MKHIPLTTLCVAISAVLLTA. The N-palmitoyl cysteine moiety is linked to residue Cys21. Residue Cys21 is the site of S-diacylglycerol cysteine attachment. Disordered regions lie at residues 26–92 and 384–412; these read GSNP…KEQV and GSAI…LEGG. The segment covering 42 to 51 has biased composition (gly residues); that stretch reads GNTGNTGNAG. Residues 389 to 410 are compositionally biased toward basic and acidic residues; sequence SDKEKDSETKHPFTSDAKDRLE.

The protein belongs to the TbpB family.

The protein resides in the cell outer membrane. The protein localises to the cell surface. Its function is as follows. Moraxella acquires iron by extracting it from serum transferrin (TF) in its human host. Acts as a transferrin receptor and is required for transferrin utilization. The protein is Transferrin-binding protein B of Moraxella catarrhalis (Branhamella catarrhalis).